Here is a 191-residue protein sequence, read N- to C-terminus: Large ribosomal subunit protein uL6 (191 aa).

The protein belongs to the universal ribosomal protein uL6 family. Component of the large ribosomal subunit. Mature ribosomes consist of a small (40S) and a large (60S) subunit. The 40S subunit contains about 32 different proteins and 1 molecule of RNA (18S). The 60S subunit contains 45 different proteins and 3 molecules of RNA (25S, 5.8S and 5S).

The protein resides in the cytoplasm. Component of the ribosome, a large ribonucleoprotein complex responsible for the synthesis of proteins in the cell. The small ribosomal subunit (SSU) binds messenger RNAs (mRNAs) and translates the encoded message by selecting cognate aminoacyl-transfer RNA (tRNA) molecules. The large subunit (LSU) contains the ribosomal catalytic site termed the peptidyl transferase center (PTC), which catalyzes the formation of peptide bonds, thereby polymerizing the amino acids delivered by tRNAs into a polypeptide chain. The nascent polypeptides leave the ribosome through a tunnel in the LSU and interact with protein factors that function in enzymatic processing, targeting, and the membrane insertion of nascent chains at the exit of the ribosomal tunnel. In Candida albicans (strain SC5314 / ATCC MYA-2876) (Yeast), this protein is Large ribosomal subunit protein uL6.